A 323-amino-acid polypeptide reads, in one-letter code: Beta-ketoacyl-[acyl-carrier-protein] synthase III 1 (323 aa).

Catalysis depends on residues cysteine 114 and histidine 254. An ACP-binding region spans residues 255 to 259 (QANLR). Asparagine 284 is a catalytic residue.

The protein belongs to the thiolase-like superfamily. FabH family. As to quaternary structure, homodimer.

Its subcellular location is the cytoplasm. It catalyses the reaction malonyl-[ACP] + acetyl-CoA + H(+) = 3-oxobutanoyl-[ACP] + CO2 + CoA. It functions in the pathway lipid metabolism; fatty acid biosynthesis. In terms of biological role, catalyzes the condensation reaction of fatty acid synthesis by the addition to an acyl acceptor of two carbons from malonyl-ACP. Catalyzes the first condensation reaction which initiates fatty acid synthesis and may therefore play a role in governing the total rate of fatty acid production. Possesses both acetoacetyl-ACP synthase and acetyl transacylase activities. Its substrate specificity determines the biosynthesis of branched-chain and/or straight-chain of fatty acids. The polypeptide is Beta-ketoacyl-[acyl-carrier-protein] synthase III 1 (Lactiplantibacillus plantarum (strain ATCC BAA-793 / NCIMB 8826 / WCFS1) (Lactobacillus plantarum)).